A 387-amino-acid chain; its full sequence is Cytochrome b (387 aa).

The helical transmembrane segment at 32-52 (LGSLLGLCLVIQIASGVFLAM) threads the bilayer. Heme b is bound by residues His-82 and His-96. Helical transmembrane passes span 85-105 (GASF…YYGS), 116-136 (IGVV…CLVY), 151-171 (LSAI…GFSV), 179-199 (FFAL…MHLM), 225-245 (FIFK…LFVF), 289-309 (LGGV…PYTD), 324-344 (LAFY…QLHV), and 350-370 (QLGQ…VPVI). Heme b is bound by residues His-183 and His-197.

Belongs to the cytochrome b family. Component of the ubiquinol-cytochrome c oxidoreductase (cytochrome b-c1 complex, complex III, CIII), a multisubunit enzyme composed of 10 subunits. The complex is composed of 3 respiratory subunits cytochrome b (COB), cytochrome c1 (CYT1) and Rieske protein (RIP1), 2 core protein subunits COR1 and QCR2, and 5 low-molecular weight protein subunits QCR6, QCR7, QCR8, QCR9 and QCR10. The complex exists as an obligatory dimer and forms supercomplexes (SCs) in the inner mitochondrial membrane with a monomer or a dimer of cytochrome c oxidase (complex IV, CIV), resulting in 2 different assemblies (supercomplexes III(2)IV and III(2)IV(2)). The cofactor is heme b.

The protein localises to the mitochondrion inner membrane. In terms of biological role, component of the ubiquinol-cytochrome c oxidoreductase, a multisubunit transmembrane complex that is part of the mitochondrial electron transport chain which drives oxidative phosphorylation. The complex plays an important role in the uptake of multiple carbon sources present in different host niches. In Candida albicans (strain SC5314 / ATCC MYA-2876) (Yeast), this protein is Cytochrome b.